The primary structure comprises 104 residues: Evasin P1174 (104 aa).

A signal peptide spans leucine 1 to alanine 27. Disulfide bonds link cysteine 40/cysteine 59, cysteine 44/cysteine 61, and cysteine 55/cysteine 72. N-linked (GlcNAc...) asparagine glycans are attached at residues asparagine 43, asparagine 49, and asparagine 58. Residues lysine 85–histidine 104 are disordered.

It is found in the secreted. Salivary chemokine-binding protein which binds to host chemokines CXCL1 and CXCL8. This chain is Evasin P1174, found in Ixodes ricinus (Common tick).